The following is a 50-amino-acid chain: Insulin-1 (50 aa).

3 cysteine pairs are disulfide-bonded: Cys-7-Cys-36, Cys-19-Cys-49, and Cys-35-Cys-40.

This sequence belongs to the insulin family. In terms of assembly, heterodimer of a B chain and an A chain linked by two disulfide bonds.

It is found in the secreted. Insulin decreases blood glucose concentration. It increases cell permeability to monosaccharides, amino acids and fatty acids. It accelerates glycolysis, the pentose phosphate cycle, and glycogen synthesis in liver. This is Insulin-1 from Katsuwonus pelamis (Skipjack tuna).